A 370-amino-acid chain; its full sequence is Peptide chain release factor 2 (370 aa).

At Gln-252 the chain carries N5-methylglutamine.

This sequence belongs to the prokaryotic/mitochondrial release factor family. Post-translationally, methylated by PrmC. Methylation increases the termination efficiency of RF2.

It is found in the cytoplasm. In terms of biological role, peptide chain release factor 2 directs the termination of translation in response to the peptide chain termination codons UGA and UAA. This Mycobacterium avium (strain 104) protein is Peptide chain release factor 2.